A 156-amino-acid polypeptide reads, in one-letter code: Cyanate hydratase (156 aa).

Catalysis depends on residues arginine 96, glutamate 99, and serine 122.

The protein belongs to the cyanase family.

The enzyme catalyses cyanate + hydrogencarbonate + 3 H(+) = NH4(+) + 2 CO2. Its function is as follows. Catalyzes the reaction of cyanate with bicarbonate to produce ammonia and carbon dioxide. The chain is Cyanate hydratase from Pseudomonas aeruginosa (strain UCBPP-PA14).